The following is a 733-amino-acid chain: Forkhead box protein K1 (733 aa).

A2 is subject to N-acetylalanine. Positions 2 to 40 (AEVGEDSGARALLALRSAPCSPVLCAAAAAAAFPAAAPP) are interaction with SIN3A and SIN3B. The interval 36 to 79 (AAAPPPAPAQPQPPPGPPPPPPPPLPPGAIAGAGSSGGSSGVSG) is disordered. Positions 37 to 62 (AAPPPAPAQPQPPPGPPPPPPPPLPP) are enriched in pro residues. A required for interaction with FOXO4 and MEF2C region spans residues 95–420 (AASVRQSPGP…PLSSRSAPAS (326 aa)). S101 is subject to Phosphoserine. In terms of domain architecture, FHA spans 123-175 (VTIGRNSSQGSVDLSMGLSSFISRRHLQLSFQEPHFYLRCLGKNGVFVDGAFQ). R161 and R191 each carry omega-N-methylarginine. A phosphoserine mark is found at S213, S223, S239, and S243. T245 and T247 each carry phosphothreonine. S253, S257, S295, and S299 each carry phosphoserine. 2 disordered regions span residues 287 to 306 (ASEQQADTSGGDSPKDESKP) and 413 to 436 (SSRSAPASPTHPGLMSPRSGGLQT). Positions 305 to 400 (KPPFSYAQLI…EQAFRKRRQR (96 aa)) form a DNA-binding region, fork-head. Phosphoserine is present on residues S416 and S420. Phosphothreonine is present on T422. Residue S428 is modified to Phosphoserine. Phosphothreonine is present on T436. S441, S445, and S459 each carry phosphoserine. Residues 676 to 697 (VAATATTTPATATTASASASST) show a composition bias toward low complexity. The interval 676–733 (VAATATTTPATATTASASASSTGEPEVKRSRVEEPSGAVTTPAGVIAAAGPQGPGTGE) is disordered. Residues 700–709 (PEVKRSRVEE) are compositionally biased toward basic and acidic residues.

Interacts with SIN3A and SIN3B (via PAH2) to form a complex which represses transcription. Component of SIN3A-, but not SIN3B-, containing multiprotein complexes. Interacts with FOXO4 and MEF2C; both interactions inhibit FOXO4 and MEF2C transactivation activity. Interacts (when phosphorylated) with YWHAE/14-3-3-epsilon; promotes sequestration in the cytoplasm and leads to impaired ability to bind DNA. Interacts with FHL2. Interacts with SRF. Interacts with DVL2 and DVL3; the interaction induces DVL2 nuclear translocation. Interacts with BAP1 (when phosphorylated). Accessory component of the polycomb repressive deubiquitinase (PR-DUB) complex, at least composed of BAP1, one of ASXL1, ASXL2 or (probably) ASXL3 and one of MBD5 or MBD6. The PR-DUB core associates with a number of accessory proteins, including FOXK1, FOXK2, KDM1B, HCFC1 and OGT. In terms of processing, phosphorylation by GSK3 (GSK3A or GSK3B) promotes interaction with YWHAE/14-3-3-epsilon and retention in the cytoplasm. In response to mTORC1 signaling, phosphorylation by GSK3 is prevented, leading to translocation to the nucleus. In terms of tissue distribution, expressed both developing and adult tissues. In adults, significant expression is seen in tumors of the brain, colon and lymph node.

The protein resides in the nucleus. Its subcellular location is the cytoplasm. In terms of biological role, transcriptional regulator involved in different processes such as glucose metabolism, aerobic glycolysis, muscle cell differentiation and autophagy. Recognizes and binds the forkhead DNA sequence motif (5'-GTAAACA-3') and can both act as a transcription activator or repressor, depending on the context. Together with FOXK2, acts as a key regulator of metabolic reprogramming towards aerobic glycolysis, a process in which glucose is converted to lactate in the presence of oxygen. Acts by promoting expression of enzymes for glycolysis (such as hexokinase-2 (HK2), phosphofructokinase, pyruvate kinase (PKLR) and lactate dehydrogenase), while suppressing further oxidation of pyruvate in the mitochondria by up-regulating pyruvate dehydrogenase kinases PDK1 and PDK4. Probably plays a role in gluconeogenesis during overnight fasting, when lactate from white adipose tissue and muscle is the main substrate. Involved in mTORC1-mediated metabolic reprogramming: in response to mTORC1 signaling, translocates into the nucleus and regulates the expression of genes associated with glycolysis and downstream anabolic pathways, such as HIF1A, thereby regulating glucose metabolism. Together with FOXK2, acts as a negative regulator of autophagy in skeletal muscle: in response to starvation, enters the nucleus, binds the promoters of autophagy genes and represses their expression, preventing proteolysis of skeletal muscle proteins. Acts as a transcriptional regulator of the myogenic progenitor cell population in skeletal muscle. Binds to the upstream enhancer region (CCAC box) of myoglobin (MB) gene, regulating the myogenic progenitor cell population. Promotes muscle progenitor cell proliferation by repressing the transcriptional activity of FOXO4, thereby inhibiting myogenic differentiation. Involved in remodeling processes of adult muscles that occur in response to physiological stimuli. Required to correct temporal orchestration of molecular and cellular events necessary for muscle repair. Represses myogenic differentiation by inhibiting MEFC activity. Positively regulates Wnt/beta-catenin signaling by translocating DVL into the nucleus. Reduces virus replication, probably by binding the interferon stimulated response element (ISRE) to promote antiviral gene expression. Accessory component of the polycomb repressive deubiquitinase (PR-DUB) complex; recruits the PR-DUB complex to specific FOXK1-bound genes. The sequence is that of Forkhead box protein K1 from Homo sapiens (Human).